Here is a 160-residue protein sequence, read N- to C-terminus: 2-C-methyl-D-erythritol 2,4-cyclodiphosphate synthase (160 aa).

Residues Asp12 and His14 each contribute to the a divalent metal cation site. 4-CDP-2-C-methyl-D-erythritol 2-phosphate-binding positions include Asp12–His14 and His38–Ser39. His46 provides a ligand contact to a divalent metal cation. Residues Asp60–Gly62, Phe65–Asp69, Thr136–Glu139, Phe143, and Arg146 each bind 4-CDP-2-C-methyl-D-erythritol 2-phosphate.

Belongs to the IspF family. In terms of assembly, homotrimer. A divalent metal cation serves as cofactor.

It carries out the reaction 4-CDP-2-C-methyl-D-erythritol 2-phosphate = 2-C-methyl-D-erythritol 2,4-cyclic diphosphate + CMP. The protein operates within isoprenoid biosynthesis; isopentenyl diphosphate biosynthesis via DXP pathway; isopentenyl diphosphate from 1-deoxy-D-xylulose 5-phosphate: step 4/6. Involved in the biosynthesis of isopentenyl diphosphate (IPP) and dimethylallyl diphosphate (DMAPP), two major building blocks of isoprenoid compounds. Catalyzes the conversion of 4-diphosphocytidyl-2-C-methyl-D-erythritol 2-phosphate (CDP-ME2P) to 2-C-methyl-D-erythritol 2,4-cyclodiphosphate (ME-CPP) with a corresponding release of cytidine 5-monophosphate (CMP). This is 2-C-methyl-D-erythritol 2,4-cyclodiphosphate synthase from Acinetobacter baumannii (strain AB307-0294).